The following is a 580-amino-acid chain: Arginine--tRNA ligase (580 aa).

A 'HIGH' region motif is present at residues 123–133 (PNLAKEMHVGH).

It belongs to the class-I aminoacyl-tRNA synthetase family. As to quaternary structure, monomer.

Its subcellular location is the cytoplasm. It carries out the reaction tRNA(Arg) + L-arginine + ATP = L-arginyl-tRNA(Arg) + AMP + diphosphate. This chain is Arginine--tRNA ligase, found in Pseudoalteromonas translucida (strain TAC 125).